A 740-amino-acid chain; its full sequence is Folic acid synthesis protein fol1 (740 aa).

DHNA stretches follow at residues aspartate 39–aspartate 160 and aspartate 161–serine 280. The tract at residues isoleucine 291–proline 449 is HPPK. A Pterin-binding domain is found at threonine 471–lysine 730. Positions isoleucine 473–tyrosine 740 are DHPS. Asparagine 478 serves as a coordination point for Mg(2+). (7,8-dihydropterin-6-yl)methyl diphosphate-binding positions include threonine 517, aspartate 552, asparagine 571, aspartate 643, lysine 683, and arginine 718 to histidine 720.

This sequence in the N-terminal section; belongs to the DHNA family. In the central section; belongs to the HPPK family. It in the C-terminal section; belongs to the DHPS family. Mg(2+) is required as a cofactor.

The enzyme catalyses 7,8-dihydroneopterin = 6-hydroxymethyl-7,8-dihydropterin + glycolaldehyde. It catalyses the reaction 6-hydroxymethyl-7,8-dihydropterin + ATP = (7,8-dihydropterin-6-yl)methyl diphosphate + AMP + H(+). The catalysed reaction is (7,8-dihydropterin-6-yl)methyl diphosphate + 4-aminobenzoate = 7,8-dihydropteroate + diphosphate. It functions in the pathway cofactor biosynthesis; tetrahydrofolate biosynthesis; 2-amino-4-hydroxy-6-hydroxymethyl-7,8-dihydropteridine diphosphate from 7,8-dihydroneopterin triphosphate: step 3/4. The protein operates within cofactor biosynthesis; tetrahydrofolate biosynthesis; 2-amino-4-hydroxy-6-hydroxymethyl-7,8-dihydropteridine diphosphate from 7,8-dihydroneopterin triphosphate: step 4/4. Its pathway is cofactor biosynthesis; tetrahydrofolate biosynthesis; 7,8-dihydrofolate from 2-amino-4-hydroxy-6-hydroxymethyl-7,8-dihydropteridine diphosphate and 4-aminobenzoate: step 1/2. In terms of biological role, catalyzes three sequential steps of tetrahydrofolate biosynthesis. The sequence is that of Folic acid synthesis protein fol1 (fol1) from Pneumocystis carinii.